The primary structure comprises 1553 residues: Mediator of RNA polymerase II transcription subunit 14 (1553 aa).

2 short sequence motifs (LXXLL motif) span residues 55–59 (LAELL) and 472–476 (LPALL). A Phosphoserine modification is found at Ser-615. Disordered regions lie at residues 699-723 (FATQ…GTSG), 1006-1199 (ASHE…LNRP), and 1513-1553 (GVGS…GGPQ). At Ser-1015 the chain carries Phosphoserine. Low complexity-rich tracts occupy residues 1024 to 1039 (GGPS…GSSP) and 1065 to 1080 (PSSS…HPSA). The segment covering 1081–1090 (GAGGGSGPQG) has biased composition (gly residues). Over residues 1099–1108 (PPAPHMPHPS) the composition is skewed to pro residues. Polar residues predominate over residues 1131 to 1155 (GPNTLYMQSHQDSPFTAMSPANNNW). The segment covering 1159–1169 (PSMPRPSPRPG) has biased composition (pro residues). Positions 1177-1193 (TGGGAGVAGGTDRGGSR) are enriched in gly residues. Residues 1515 to 1534 (GSSPNPMMPMQQLPQQVGPQ) are compositionally biased toward low complexity.

It belongs to the Mediator complex subunit 14 family. As to quaternary structure, component of the Mediator complex, which may include CDK8, MED4, MED6, MED11, MED14, MED17, MED18, MED20, MED21, MED22, MED27, MED28, MED30 and MED31.

The protein localises to the nucleus. Functionally, component of the Mediator complex, a coactivator involved in the regulated transcription of nearly all RNA polymerase II-dependent genes. Mediator functions as a bridge to convey information from gene-specific regulatory proteins to the basal RNA polymerase II transcription machinery. Mediator is recruited to promoters by direct interactions with regulatory proteins and serves as a scaffold for the assembly of a functional pre-initiation complex with RNA polymerase II and the general transcription factors. Required for activated transcription of the MtnA, MtnB and MtnD genes. In Drosophila melanogaster (Fruit fly), this protein is Mediator of RNA polymerase II transcription subunit 14 (MED14).